The sequence spans 304 residues: Thymidylate synthase (304 aa).

DUMP contacts are provided by residues Arg-30 and 157–158 (RR). The active-site Nucleophile is Cys-177. Residues 206–209 (RSCD), Asn-217, and 247–249 (HVY) contribute to the dUMP site. Position 209 (Asp-209) interacts with (6R)-5,10-methylene-5,6,7,8-tetrahydrofolate.

Belongs to the thymidylate synthase family. In terms of assembly, homodimer.

It localises to the nucleus. It carries out the reaction dUMP + (6R)-5,10-methylene-5,6,7,8-tetrahydrofolate = 7,8-dihydrofolate + dTMP. The protein operates within pyrimidine metabolism; dTTP biosynthesis. Its activity is regulated as follows. Inhibited by 5-fluoro-2'-deoxyuridine 5'-monophosphate (FdUMP). In terms of biological role, thymidylate synthase required for de novo biosynthesis of pyrimidine deoxyribonucleotides. Required for both nuclear and mitochondrial DNA synthesis. This chain is Thymidylate synthase (CDC21), found in Saccharomyces cerevisiae (strain ATCC 204508 / S288c) (Baker's yeast).